Consider the following 206-residue polypeptide: Nucleoside triphosphate pyrophosphatase (206 aa).

Residue Asp-76 is the Proton acceptor of the active site.

Belongs to the Maf family. A divalent metal cation is required as a cofactor.

It localises to the cytoplasm. It catalyses the reaction a ribonucleoside 5'-triphosphate + H2O = a ribonucleoside 5'-phosphate + diphosphate + H(+). It carries out the reaction a 2'-deoxyribonucleoside 5'-triphosphate + H2O = a 2'-deoxyribonucleoside 5'-phosphate + diphosphate + H(+). Functionally, nucleoside triphosphate pyrophosphatase. May have a dual role in cell division arrest and in preventing the incorporation of modified nucleotides into cellular nucleic acids. This is Nucleoside triphosphate pyrophosphatase from Streptomyces avermitilis (strain ATCC 31267 / DSM 46492 / JCM 5070 / NBRC 14893 / NCIMB 12804 / NRRL 8165 / MA-4680).